Consider the following 597-residue polypeptide: Arginine--tRNA ligase (597 aa).

Over residues 23–32 the composition is skewed to low complexity; sequence QAAAARQASQ. A disordered region spans residues 23-43; that stretch reads QAAAARQASQPLDPQLAPASK. The short motif at 137–147 is the 'HIGH' region element; that stretch reads PNIAKEMHVGH.

This sequence belongs to the class-I aminoacyl-tRNA synthetase family. As to quaternary structure, monomer.

Its subcellular location is the cytoplasm. The catalysed reaction is tRNA(Arg) + L-arginine + ATP = L-arginyl-tRNA(Arg) + AMP + diphosphate. The polypeptide is Arginine--tRNA ligase (Synechococcus sp. (strain WH7803)).